The sequence spans 170 residues: Acireductone dioxygenase (170 aa).

H99, H101, E105, and H144 together coordinate Fe(2+). Residues H99, H101, E105, and H144 each coordinate Ni(2+).

The protein belongs to the acireductone dioxygenase (ARD) family. In terms of assembly, monomer. Fe(2+) serves as cofactor. Ni(2+) is required as a cofactor.

It catalyses the reaction 1,2-dihydroxy-5-(methylsulfanyl)pent-1-en-3-one + O2 = 3-(methylsulfanyl)propanoate + CO + formate + 2 H(+). The catalysed reaction is 1,2-dihydroxy-5-(methylsulfanyl)pent-1-en-3-one + O2 = 4-methylsulfanyl-2-oxobutanoate + formate + 2 H(+). It participates in amino-acid biosynthesis; L-methionine biosynthesis via salvage pathway; L-methionine from S-methyl-5-thio-alpha-D-ribose 1-phosphate: step 5/6. Functionally, catalyzes 2 different reactions between oxygen and the acireductone 1,2-dihydroxy-3-keto-5-methylthiopentene (DHK-MTPene) depending upon the metal bound in the active site. Fe-containing acireductone dioxygenase (Fe-ARD) produces formate and 2-keto-4-methylthiobutyrate (KMTB), the alpha-ketoacid precursor of methionine in the methionine recycle pathway. Ni-containing acireductone dioxygenase (Ni-ARD) produces methylthiopropionate, carbon monoxide and formate, and does not lie on the methionine recycle pathway. The sequence is that of Acireductone dioxygenase from Bacillus thuringiensis (strain Al Hakam).